Consider the following 131-residue polypeptide: Small ribosomal subunit protein eS8 (131 aa).

Residues 11–36 (DLKKPSGGKKGRVRKTKKKALCGGPP) are disordered. A compositionally biased stretch (basic residues) spans 16–30 (SGGKKGRVRKTKKKA).

Belongs to the eukaryotic ribosomal protein eS8 family. Part of the 30S ribosomal subunit.

This Pyrobaculum islandicum (strain DSM 4184 / JCM 9189 / GEO3) protein is Small ribosomal subunit protein eS8.